A 441-amino-acid polypeptide reads, in one-letter code: Arginine biosynthesis bifunctional protein ArgJ, mitochondrial (441 aa).

The transit peptide at 1 to 8 directs the protein to the mitochondrion; the sequence is MRISSTLL. Positions 177, 204, 215, 301, 436, and 441 each coordinate substrate. Thr-215 acts as the Nucleophile in catalysis.

It belongs to the ArgJ family. In terms of assembly, heterodimer of an alpha and a beta chain. In terms of processing, the alpha and beta chains are autoproteolytically processed from a single precursor protein within the mitochondrion.

The protein localises to the mitochondrion matrix. It carries out the reaction N(2)-acetyl-L-ornithine + L-glutamate = N-acetyl-L-glutamate + L-ornithine. The catalysed reaction is L-glutamate + acetyl-CoA = N-acetyl-L-glutamate + CoA + H(+). It participates in amino-acid biosynthesis; L-arginine biosynthesis; L-ornithine and N-acetyl-L-glutamate from L-glutamate and N(2)-acetyl-L-ornithine (cyclic): step 1/1. The protein operates within amino-acid biosynthesis; L-arginine biosynthesis; N(2)-acetyl-L-ornithine from L-glutamate: step 1/4. With respect to regulation, inhibited by ornithine. In terms of biological role, catalyzes two activities which are involved in the cyclic version of arginine biosynthesis: the synthesis of acetylglutamate from glutamate and acetyl-CoA, and of ornithine by transacetylation between acetylornithine and glutamate. The protein is Arginine biosynthesis bifunctional protein ArgJ, mitochondrial of Saccharomyces cerevisiae (strain ATCC 204508 / S288c) (Baker's yeast).